The following is a 516-amino-acid chain: Nuclear speckle splicing regulatory protein 1 (516 aa).

4 disordered regions span residues 1–43 (MATS…GESL), 111–137 (ERKKEQERRDERKIQKEREAEGEKFAD), 151–170 (KERQEELEREKREAELEAAL), and 188–494 (QTVG…SSAR). At serine 33 the chain carries Phosphoserine. Residues 100–176 (KYINQLLRAV…EAALDVKKQK (77 aa)) adopt a coiled-coil conformation. A compositionally biased stretch (low complexity) spans 207–221 (TSSAAAERSPSPEST). Basic and acidic residues-rich tracts occupy residues 222-239 (ANRRESEAESHSDDDQVD) and 271-466 (ERER…KLVE). Positions 358–401 (KGERDRRDNSPKDRERDRKGERDRRDNSPKDRERETRDKSPKDR) form a coiled coil.

Belongs to the NSRP1 family.

This Danio rerio (Zebrafish) protein is Nuclear speckle splicing regulatory protein 1 (nsrp1).